We begin with the raw amino-acid sequence, 144 residues long: Large ribosomal subunit protein uL13 (144 aa).

This sequence belongs to the universal ribosomal protein uL13 family. As to quaternary structure, part of the 50S ribosomal subunit.

In terms of biological role, this protein is one of the early assembly proteins of the 50S ribosomal subunit, although it is not seen to bind rRNA by itself. It is important during the early stages of 50S assembly. This is Large ribosomal subunit protein uL13 from Heliobacterium modesticaldum (strain ATCC 51547 / Ice1).